Here is a 485-residue protein sequence, read N- to C-terminus: Inosine-5'-monophosphate dehydrogenase (485 aa).

2 CBS domains span residues 95–154 and 155–215; these read VITN…IDDV and MTKE…AKDS. Residues Asp-249 and 299–301 each bind NAD(+); that span reads GIG. Positions 301 and 303 each coordinate K(+). Ser-304 serves as a coordination point for IMP. Cys-306 contributes to the K(+) binding site. Residue Cys-306 is the Thioimidate intermediate of the active site. Residues 339–341, 362–363, and 386–390 each bind IMP; these read DGG, GS, and YRGMG. The active-site Proton acceptor is the Arg-402. Residue Glu-414 coordinates IMP. K(+) contacts are provided by Glu-468, Ser-469, and His-470.

The protein belongs to the IMPDH/GMPR family. In terms of assembly, homotetramer. The cofactor is K(+).

It carries out the reaction IMP + NAD(+) + H2O = XMP + NADH + H(+). Its pathway is purine metabolism; XMP biosynthesis via de novo pathway; XMP from IMP: step 1/1. Mycophenolic acid (MPA) is a non-competitive inhibitor that prevents formation of the closed enzyme conformation by binding to the same site as the amobile flap. In contrast, mizoribine monophosphate (MZP) is a competitive inhibitor that induces the closed conformation. MPA is a potent inhibitor of mammalian IMPDHs but a poor inhibitor of the bacterial enzymes. MZP is a more potent inhibitor of bacterial IMPDH. Functionally, catalyzes the conversion of inosine 5'-phosphate (IMP) to xanthosine 5'-phosphate (XMP), the first committed and rate-limiting step in the de novo synthesis of guanine nucleotides, and therefore plays an important role in the regulation of cell growth. This chain is Inosine-5'-monophosphate dehydrogenase, found in Halalkalibacterium halodurans (strain ATCC BAA-125 / DSM 18197 / FERM 7344 / JCM 9153 / C-125) (Bacillus halodurans).